The sequence spans 224 residues: Thiamine-phosphate synthase (224 aa).

4-amino-2-methyl-5-(diphosphooxymethyl)pyrimidine contacts are provided by residues Gln44–Lys48 and Asn79. 2 residues coordinate Mg(2+): Asp80 and Asp99. Ser117 provides a ligand contact to 4-amino-2-methyl-5-(diphosphooxymethyl)pyrimidine. 2-[(2R,5Z)-2-carboxy-4-methylthiazol-5(2H)-ylidene]ethyl phosphate is bound at residue Thr143 to Thr145. Residue Lys146 coordinates 4-amino-2-methyl-5-(diphosphooxymethyl)pyrimidine. 2-[(2R,5Z)-2-carboxy-4-methylthiazol-5(2H)-ylidene]ethyl phosphate-binding positions include Gly175 and Ile195–Ser196.

It belongs to the thiamine-phosphate synthase family. Requires Mg(2+) as cofactor.

It carries out the reaction 2-[(2R,5Z)-2-carboxy-4-methylthiazol-5(2H)-ylidene]ethyl phosphate + 4-amino-2-methyl-5-(diphosphooxymethyl)pyrimidine + 2 H(+) = thiamine phosphate + CO2 + diphosphate. The catalysed reaction is 2-(2-carboxy-4-methylthiazol-5-yl)ethyl phosphate + 4-amino-2-methyl-5-(diphosphooxymethyl)pyrimidine + 2 H(+) = thiamine phosphate + CO2 + diphosphate. It catalyses the reaction 4-methyl-5-(2-phosphooxyethyl)-thiazole + 4-amino-2-methyl-5-(diphosphooxymethyl)pyrimidine + H(+) = thiamine phosphate + diphosphate. Its pathway is cofactor biosynthesis; thiamine diphosphate biosynthesis; thiamine phosphate from 4-amino-2-methyl-5-diphosphomethylpyrimidine and 4-methyl-5-(2-phosphoethyl)-thiazole: step 1/1. Its function is as follows. Condenses 4-methyl-5-(beta-hydroxyethyl)thiazole monophosphate (THZ-P) and 2-methyl-4-amino-5-hydroxymethyl pyrimidine pyrophosphate (HMP-PP) to form thiamine monophosphate (TMP). This chain is Thiamine-phosphate synthase, found in Bacillus velezensis (strain DSM 23117 / BGSC 10A6 / LMG 26770 / FZB42) (Bacillus amyloliquefaciens subsp. plantarum).